The chain runs to 635 residues: Threonine--tRNA ligase (635 aa).

Positions 1 to 61 constitute a TGS domain; sequence MVSIRLPDGS…DRDASLAIVT (61 aa). The interval 242 to 533 is catalytic; sequence DHRKLGKQLD…LIEHHAGAMP (292 aa). Cys333, His384, and His510 together coordinate Zn(2+).

Belongs to the class-II aminoacyl-tRNA synthetase family. As to quaternary structure, homodimer. Zn(2+) serves as cofactor.

The protein localises to the cytoplasm. The catalysed reaction is tRNA(Thr) + L-threonine + ATP = L-threonyl-tRNA(Thr) + AMP + diphosphate + H(+). Functionally, catalyzes the attachment of threonine to tRNA(Thr) in a two-step reaction: L-threonine is first activated by ATP to form Thr-AMP and then transferred to the acceptor end of tRNA(Thr). Also edits incorrectly charged L-seryl-tRNA(Thr). The chain is Threonine--tRNA ligase from Burkholderia lata (strain ATCC 17760 / DSM 23089 / LMG 22485 / NCIMB 9086 / R18194 / 383).